Consider the following 588-residue polypeptide: Adenine deaminase (588 aa).

Belongs to the metallo-dependent hydrolases superfamily. Adenine deaminase family. Requires Mn(2+) as cofactor.

The enzyme catalyses adenine + H2O + H(+) = hypoxanthine + NH4(+). The protein is Adenine deaminase of Desulforamulus reducens (strain ATCC BAA-1160 / DSM 100696 / MI-1) (Desulfotomaculum reducens).